Here is a 331-residue protein sequence, read N- to C-terminus: T-cell acute lymphocytic leukemia protein 1 (331 aa).

A compositionally biased stretch (basic and acidic residues) spans 1-22; the sequence is MTERPPSEAARSDPQLEGRDAA. Disordered stretches follow at residues 1–27 and 40–86; these read MTER…ASMA and ETSR…EARH. A Phosphoserine modification is found at S12. The span at 56–70 shows a compositional bias: gly residues; it reads ARGGPGGGPAGGGGA. A compositionally biased stretch (basic and acidic residues) spans 72-86; the sequence is RDLKGRDAATAEARH. 2 positions are modified to phosphoserine: S122 and S172. In terms of domain architecture, bHLH spans 187–239; sequence VRRIFTNSRERWRQQNVNGAFAELRKLIPTHPPDKKLSKNEILRLAMKYINFL. Residues 249–331 are disordered; sequence EGTQRAKTGK…LPAADGAGPR (83 aa). Residues 263 to 275 are compositionally biased toward gly residues; sequence GAGGGGGGGGGGA.

Efficient DNA binding requires dimerization with another bHLH protein. Forms heterodimers with TCF3. Binds to the LIM domain containing protein LMO2 and to DRG1. Can assemble in a complex with LDB1 and LMO2. Component of a TAL-1 complex composed at least of CBFA2T3, LDB1, TAL1 and TCF3. Interacts with SBNO2; this interaction inhibits TAL1 occupancy of the DCSTAMP promoter, leading to the activation of the DCSTAMP promoter by the transcription factor MITF. Post-translationally, phosphorylated on serine residues. Phosphorylation of Ser-122 is strongly stimulated by hypoxia. In terms of processing, ubiquitinated; subsequent to hypoxia-dependent phosphorylation of Ser-122, ubiquitination targets the protein for rapid degradation via the ubiquitin system. This process may be characteristic for microvascular endothelial cells, since it could not be observed in large vessel endothelial cells. In terms of tissue distribution, leukemic stem cell.

The protein localises to the nucleus. Functionally, implicated in the genesis of hemopoietic malignancies. It may play an important role in hemopoietic differentiation. Serves as a positive regulator of erythroid differentiation. The chain is T-cell acute lymphocytic leukemia protein 1 (TAL1) from Homo sapiens (Human).